The primary structure comprises 253 residues: uncharacterized protein (253 aa).

NADP(+) is bound at residue 10 to 34; sequence LVTGASSGLGRGLALWLARRGVRVF. S142 serves as a coordination point for substrate. Y155 (proton acceptor) is an active-site residue.

Belongs to the short-chain dehydrogenases/reductases (SDR) family.

This is an uncharacterized protein from Myxococcus xanthus (strain DK1622).